Reading from the N-terminus, the 245-residue chain is MYRYKITIEYLGTDLAGWQRQAGIMSVQQILEEAIYKFSGEQVVLFGSGRTDAGVHAIGQVAHFDLSKNLETHKIITAINYFARPYSVIVWNCEMAPNNFHARFSAVSRHYIYRILNRPYSSVINRDRVWWISSPLDVLAMQKAATYLLGKHDFTSFRASSCQSKSPIKTLTELNIIKEDEEIKLYLSAPSFLHHMVRNIVGSLVLVGKNVWQAEYIKELLEVKDRKAAGPTAPASGLYFVRTEY.

Catalysis depends on D52, which acts as the Nucleophile. Y111 serves as a coordination point for substrate.

The protein belongs to the tRNA pseudouridine synthase TruA family. In terms of assembly, homodimer.

The catalysed reaction is uridine(38/39/40) in tRNA = pseudouridine(38/39/40) in tRNA. In terms of biological role, formation of pseudouridine at positions 38, 39 and 40 in the anticodon stem and loop of transfer RNAs. This chain is tRNA pseudouridine synthase A, found in Rickettsia canadensis (strain McKiel).